The chain runs to 460 residues: Ufm1-specific protease 2 (460 aa).

Active-site residues include Cys293, Asp417, and His419.

Belongs to the peptidase C78 family.

The protein resides in the endoplasmic reticulum. Its subcellular location is the cytoplasm. The protein localises to the nucleus. Its function is as follows. Thiol-dependent isopeptidase that specifically cleaves UFM1, a ubiquitin-like modifier protein, from conjugated proteins. While it is also able to mediate the processing of UFM1 precursors, a prerequisite for conjugation reactions, UFSP2 mainly acts as a protein deUFMylase that mediates deconjugation of UFM1 from target proteins. The protein is Ufm1-specific protease 2 of Gallus gallus (Chicken).